Here is a 358-residue protein sequence, read N- to C-terminus: MVNSLKKQTFTEMRPGVKVPAKETILTPRFYTTDFDEMAKMDISVNEDELMAILEEFRADYNRHHFVRNEEFAQSWDHIDGETRRLFVEFLERSCTAEFSGFLLYKELGRRLKNKSPILAECFTLMSRDEARHAGFLNKAMSDFNLSLDLGFLTKSRKYTFFKPKFIFYATYLSEKIGYWRYITIYRHLEAHPEDRIYPIFRFFENWCQDENRHGDFFDAIMRARPEFLNDWQAKLWCRFFLLSVFATMYLNDIQRADFYASIGLNACDYDKYVIEKTNETSGRVFPVILDVENPEFYARLEFCIKNNEKLTKIANSNNPGFVKFFQKFPLYLSNGWQFLKLYLMKPIETATMQSSVR.

The protein belongs to the AcsF family. It depends on Fe cation as a cofactor.

It carries out the reaction Mg-protoporphyrin IX 13-monomethyl ester + 3 NADPH + 3 O2 + 2 H(+) = 3,8-divinyl protochlorophyllide a + 3 NADP(+) + 5 H2O. The protein operates within porphyrin-containing compound metabolism; chlorophyll biosynthesis (light-independent). In terms of biological role, catalyzes the formation of the isocyclic ring in chlorophyll biosynthesis. Mediates the cyclase reaction, which results in the formation of divinylprotochlorophyllide (Pchlide) characteristic of all chlorophylls from magnesium-protoporphyrin IX 13-monomethyl ester (MgPMME). The polypeptide is Magnesium-protoporphyrin IX monomethyl ester [oxidative] cyclase (Trichodesmium erythraeum (strain IMS101)).